A 207-amino-acid polypeptide reads, in one-letter code: Riboflavin synthase (207 aa).

Lumazine-binding repeat units lie at residues 1 to 94 (MFTG…LGGH) and 95 to 191 (IVQG…INYL). Residues 4 to 6 (GLV), 45 to 47 (CLT), 59 to 64 (DVSPET), 98 to 100 (GHV), Lys133, 142 to 144 (SLT), and 156 to 161 (NIIPHT) contribute to the 2,4-dihydroxypteridine site.

As to quaternary structure, homotrimer.

It carries out the reaction 2 6,7-dimethyl-8-(1-D-ribityl)lumazine + H(+) = 5-amino-6-(D-ribitylamino)uracil + riboflavin. It functions in the pathway cofactor biosynthesis; riboflavin biosynthesis; riboflavin from 2-hydroxy-3-oxobutyl phosphate and 5-amino-6-(D-ribitylamino)uracil: step 2/2. Catalyzes the dismutation of two molecules of 6,7-dimethyl-8-ribityllumazine, resulting in the formation of riboflavin and 5-amino-6-(D-ribitylamino)uracil. In Aquifex aeolicus (strain VF5), this protein is Riboflavin synthase (ribE).